The primary structure comprises 81 residues: Cytochrome b559 subunit alpha (81 aa).

Residues 21–35 (VIHSITIPMLFIAGW) form a helical membrane-spanning segment. Position 23 (His-23) interacts with heme.

It belongs to the PsbE/PsbF family. Heterodimer of an alpha subunit and a beta subunit. PSII is composed of 1 copy each of membrane proteins PsbA, PsbB, PsbC, PsbD, PsbE, PsbF, PsbH, PsbI, PsbJ, PsbK, PsbL, PsbM, PsbT, PsbX, PsbY, PsbZ, Psb30/Ycf12, peripheral proteins PsbO, CyanoQ (PsbQ), PsbU, PsbV and a large number of cofactors. It forms dimeric complexes. The cofactor is heme b.

It localises to the cellular thylakoid membrane. Functionally, this b-type cytochrome is tightly associated with the reaction center of photosystem II (PSII). PSII is a light-driven water:plastoquinone oxidoreductase that uses light energy to abstract electrons from H(2)O, generating O(2) and a proton gradient subsequently used for ATP formation. It consists of a core antenna complex that captures photons, and an electron transfer chain that converts photonic excitation into a charge separation. The protein is Cytochrome b559 subunit alpha of Rippkaea orientalis (strain PCC 8801 / RF-1) (Cyanothece sp. (strain PCC 8801)).